The sequence spans 1060 residues: DNA-directed RNA polymerase subunit beta (1060 aa).

It belongs to the RNA polymerase beta chain family. In plastids the minimal PEP RNA polymerase catalytic core is composed of four subunits: alpha, beta, beta', and beta''. When a (nuclear-encoded) sigma factor is associated with the core the holoenzyme is formed, which can initiate transcription.

It is found in the plastid. Its subcellular location is the chloroplast. The catalysed reaction is RNA(n) + a ribonucleoside 5'-triphosphate = RNA(n+1) + diphosphate. DNA-dependent RNA polymerase catalyzes the transcription of DNA into RNA using the four ribonucleoside triphosphates as substrates. This Calycanthus floridus var. glaucus (Eastern sweetshrub) protein is DNA-directed RNA polymerase subunit beta.